Here is a 380-residue protein sequence, read N- to C-terminus: Probable protein phosphatase 2C 34 (380 aa).

Residues 32–335 (AAGEFSMAAA…DDISVIVVYL (304 aa)) enclose the PPM-type phosphatase domain. Mn(2+)-binding residues include Asp-66, Gly-67, Asp-267, and Asp-326.

This sequence belongs to the PP2C family. It depends on Mg(2+) as a cofactor. Mn(2+) is required as a cofactor.

The catalysed reaction is O-phospho-L-seryl-[protein] + H2O = L-seryl-[protein] + phosphate. The enzyme catalyses O-phospho-L-threonyl-[protein] + H2O = L-threonyl-[protein] + phosphate. This is Probable protein phosphatase 2C 34 (BIPP2C2) from Oryza sativa subsp. indica (Rice).